Here is an 88-residue protein sequence, read N- to C-terminus: Large ribosomal subunit protein bL31B (88 aa).

Belongs to the bacterial ribosomal protein bL31 family. Type B subfamily. As to quaternary structure, part of the 50S ribosomal subunit.

This is Large ribosomal subunit protein bL31B from Paraburkholderia phytofirmans (strain DSM 17436 / LMG 22146 / PsJN) (Burkholderia phytofirmans).